Here is a 248-residue protein sequence, read N- to C-terminus: tRNA pseudouridine synthase A (248 aa).

The active-site Nucleophile is Asp53. Tyr111 provides a ligand contact to substrate.

The protein belongs to the tRNA pseudouridine synthase TruA family. As to quaternary structure, homodimer.

The catalysed reaction is uridine(38/39/40) in tRNA = pseudouridine(38/39/40) in tRNA. Functionally, formation of pseudouridine at positions 38, 39 and 40 in the anticodon stem and loop of transfer RNAs. This Listeria monocytogenes serotype 4b (strain CLIP80459) protein is tRNA pseudouridine synthase A.